A 145-amino-acid polypeptide reads, in one-letter code: MVDYYEVLDVPRQASSEAIKKAYRKLALKWHPDKNPENKEEAERRFKQVAEAYEVLSDAKKRDIYDRYGEAGAEGGCTGGRPFEDPFEYVFSFRDPADVFREFFGGQDPFSFDLLGNPLENILGGSEELLGKQKQSVCTPFLCLQ.

The J domain maps to 1–69 (MVDYYEVLDV…KKRDIYDRYG (69 aa)).

Expressed in sperm (at protein level).

May operate as a co-chaperone of the male germ cell- and haploid stage-specific Hsp70 proteins. The sequence is that of DnaJ homolog subfamily B member 3 (DNAJB3) from Homo sapiens (Human).